The primary structure comprises 398 residues: L-talarate/galactarate dehydratase (398 aa).

Residues 46 to 48 (DAK), 82 to 83 (KR), and K195 each bind substrate. The active-site Proton acceptor is the K197. Residue D226 participates in Mg(2+) binding. N228 contacts substrate. Mg(2+)-binding residues include E252 and E278. H328 serves as the catalytic Proton donor/acceptor. E348 provides a ligand contact to substrate.

It belongs to the mandelate racemase/muconate lactonizing enzyme family. As to quaternary structure, homooctamer; tetramer of dimers. Mg(2+) serves as cofactor.

It carries out the reaction L-altrarate = 5-dehydro-4-deoxy-D-glucarate + H2O. It catalyses the reaction galactarate = 5-dehydro-4-deoxy-D-glucarate + H2O. The catalysed reaction is L-altrarate = galactarate. Competitively inhibited by tartronate. Its function is as follows. Catalyzes the efficient dehydration of both L-talarate (also called L-altrarate) and galactarate to 5-keto-4-deoxy-D-glucarate (5-KDG). Also catalyzes the epimerization of L-talarate to galactarate; epimerization occurs in competition with dehydration. Is required for the utilization of L-talarate as a carbon source. Also functions in galactarate utilization. Is not active on other acid sugars. The sequence is that of L-talarate/galactarate dehydratase from Salmonella typhimurium (strain LT2 / SGSC1412 / ATCC 700720).